Here is an 86-residue protein sequence, read N- to C-terminus: Trypsin inhibitor (86 aa).

2 disulfides stabilise this stretch: cysteine 8-cysteine 65 and cysteine 49-cysteine 58.

In terms of biological role, serine protease inhibitor which is active against trypsin. Displays strong antifungal activity against a number of phytopathogenic fungi including M.melonis, A.cucumerina, A.solani, C.glaeosporioides and P.capsici. The chain is Trypsin inhibitor from Fagopyrum tataricum (Tartarian buckwheat).